The sequence spans 340 residues: DNA-directed RNA polymerase subunit alpha (340 aa).

An alpha N-terminal domain (alpha-NTD) region spans residues 1 to 233; that stretch reads MYRNWRDLIS…EQLSIFINFD (233 aa). The interval 251-340 is alpha C-terminal domain (alpha-CTD); the sequence is VNENLYRSVD…RIRGERKDEE (90 aa).

The protein belongs to the RNA polymerase alpha chain family. As to quaternary structure, homodimer. The RNAP catalytic core consists of 2 alpha, 1 beta, 1 beta' and 1 omega subunit. When a sigma factor is associated with the core the holoenzyme is formed, which can initiate transcription.

The catalysed reaction is RNA(n) + a ribonucleoside 5'-triphosphate = RNA(n+1) + diphosphate. DNA-dependent RNA polymerase catalyzes the transcription of DNA into RNA using the four ribonucleoside triphosphates as substrates. This chain is DNA-directed RNA polymerase subunit alpha, found in Geobacter metallireducens (strain ATCC 53774 / DSM 7210 / GS-15).